The sequence spans 354 residues: tRNA N6-adenosine threonylcarbamoyltransferase (354 aa).

Positions 111 and 115 each coordinate Fe cation. Substrate-binding positions include L134 to G138, D167, G180, and N279. Residue D319 participates in Fe cation binding.

The protein belongs to the KAE1 / TsaD family. The cofactor is Fe(2+).

Its subcellular location is the cytoplasm. It carries out the reaction L-threonylcarbamoyladenylate + adenosine(37) in tRNA = N(6)-L-threonylcarbamoyladenosine(37) in tRNA + AMP + H(+). Required for the formation of a threonylcarbamoyl group on adenosine at position 37 (t(6)A37) in tRNAs that read codons beginning with adenine. Is involved in the transfer of the threonylcarbamoyl moiety of threonylcarbamoyl-AMP (TC-AMP) to the N6 group of A37, together with TsaE and TsaB. TsaD likely plays a direct catalytic role in this reaction. The sequence is that of tRNA N6-adenosine threonylcarbamoyltransferase from Neisseria gonorrhoeae (strain ATCC 700825 / FA 1090).